We begin with the raw amino-acid sequence, 209 residues long: Large ribosomal subunit protein uL3 (209 aa).

A disordered region spans residues 127–151 (SGGPSSHGSKFHRHLGGTGQATTPA).

This sequence belongs to the universal ribosomal protein uL3 family. As to quaternary structure, part of the 50S ribosomal subunit. Forms a cluster with proteins L14 and L19.

Its function is as follows. One of the primary rRNA binding proteins, it binds directly near the 3'-end of the 23S rRNA, where it nucleates assembly of the 50S subunit. This Borrelia duttonii (strain Ly) protein is Large ribosomal subunit protein uL3.